The primary structure comprises 263 residues: Gap junction beta-6 protein (263 aa).

The Cytoplasmic segment spans residues 1–19; it reads MDWGALQTILGGVNKHSTS. A helical transmembrane segment spans residues 20 to 40; the sequence is IGKIWLTVLFIFRIMILVVAA. Residues 41–75 are Extracellular-facing; it reads ERVWGDEQDDFICNTLQPGCKNVCYDHFFPISHIR. The helical transmembrane segment at 76-96 threads the bilayer; it reads LWALQLIFVSTPALLVAMHVA. Residues 97–137 are Cytoplasmic-facing; it reads YRRHEKKRQFRKGDQKCEYKDIEEIRTQRFRIEGTLWWTYT. A helical transmembrane segment spans residues 138–158; that stretch reads CSIFFRLVFEAVFMYAFYFMY. At 159-189 the chain is on the extracellular side; it reads DGFRMPRLMKCSAWPCPNTVDCFVSRPTEKT. Residues 190–210 form a helical membrane-spanning segment; sequence VFTIFMIAVSSICILLNVAEL. Residues 211–263 lie on the Cytoplasmic side of the membrane; that stretch reads CYLLTKFFLRRSRKAGNQKHHPNHENKEETKQNEMNELISDSCQNTVIGFTSS.

The protein belongs to the connexin family. Beta-type (group I) subfamily. In terms of assembly, a connexon is composed of a hexamer of connexins. In terms of tissue distribution, exclusively expressed in the cochlea of the inner ear, where it is found in cells of the tegmentum vasculosum, cuboidal cells, supporting cells and clear cells.

The protein localises to the cell membrane. Its subcellular location is the cell junction. It is found in the gap junction. Functionally, one gap junction consists of a cluster of closely packed pairs of transmembrane channels, the connexons, through which materials of low MW diffuse from one cell to a neighboring cell. In Gallus gallus (Chicken), this protein is Gap junction beta-6 protein (GJB6).